The following is a 146-amino-acid chain: Large ribosomal subunit protein uL15 (146 aa).

A disordered region spans residues 1-54 (MKLHELQPAAGSRKAPKRVGRGTGSGLGRNAGKGEKGQNARSGGGVRPGFEGGQ). 2 stretches are compositionally biased toward gly residues: residues 21 to 31 (RGTGSGLGRNA) and 42 to 52 (SGGGVRPGFEG).

Belongs to the universal ribosomal protein uL15 family. As to quaternary structure, part of the 50S ribosomal subunit.

Functionally, binds to the 23S rRNA. This is Large ribosomal subunit protein uL15 from Clostridium botulinum (strain Eklund 17B / Type B).